A 437-amino-acid chain; its full sequence is 3-ketoacyl-CoA thiolase (437 aa).

C99 functions as the Acyl-thioester intermediate in the catalytic mechanism. Catalysis depends on proton acceptor residues H392 and C422.

This sequence belongs to the thiolase-like superfamily. Thiolase family. Heterotetramer of two alpha chains (FadJ) and two beta chains (FadI).

The protein resides in the cytoplasm. The enzyme catalyses an acyl-CoA + acetyl-CoA = a 3-oxoacyl-CoA + CoA. It functions in the pathway lipid metabolism; fatty acid beta-oxidation. Its function is as follows. Catalyzes the final step of fatty acid oxidation in which acetyl-CoA is released and the CoA ester of a fatty acid two carbons shorter is formed. This Pectobacterium carotovorum subsp. carotovorum (strain PC1) protein is 3-ketoacyl-CoA thiolase.